The following is a 131-amino-acid chain: L-ectoine synthase (131 aa).

The protein belongs to the ectoine synthase family.

It carries out the reaction (2S)-4-acetamido-2-aminobutanoate = L-ectoine + H2O. It functions in the pathway amine and polyamine biosynthesis; ectoine biosynthesis; L-ectoine from L-aspartate 4-semialdehyde: step 3/3. In terms of biological role, catalyzes the circularization of gamma-N-acetyl-alpha,gamma-diaminobutyric acid (ADABA) to ectoine (1,4,5,6-tetrahydro-2-methyl-4-pyrimidine carboxylic acid), which is an excellent osmoprotectant. The sequence is that of L-ectoine synthase from Nocardia farcinica (strain IFM 10152).